We begin with the raw amino-acid sequence, 145 residues long: Protein SprT-like (145 aa).

The SprT-like domain occupies 4–140; that stretch reads TNYVQEVSLA…VCGNCHGKLI (137 aa). His64 serves as a coordination point for Zn(2+). Glu65 is an active-site residue. His68 provides a ligand contact to Zn(2+).

Belongs to the SprT family. Zn(2+) serves as cofactor.

The protein localises to the cytoplasm. This chain is Protein SprT-like, found in Streptococcus pyogenes serotype M18 (strain MGAS8232).